The following is a 416-amino-acid chain: MPRQLSAAAVLFASLAVILHDGSQMRAKAFPKTRDYSQPTAAATGQDIAKPVQQPANQAPHQTLAARLMDGHITFQTAATIKTPTTTPVTTKNTPTTSPIIYTLVTTQATSNNSHTAPPLTKVTVGPSLAPYSLPPTITPPAHTTGTSSSTVNHTTGNATQPSNQTTLPATLSIAPHKSTTGQKPVQPTHAPGTTAAAHNTTRTAAPASTVPGSTLAPQPSSIKTGIYQVLNGSRLCIKAEMGIQLIVQDKESVFSPRRYFNLDPNATQASGNCGTRNSNLLLNFQGGFVNLTFTKDEGSYYISEVGACLTVSDPETIYQGMKHAVVMFQTVVGHSFKCVSEQSLQLSAHLQLKTTNVQLQAFDFEDDHFGNVDECSSDYTIVLPVIGAIVVGLCLVGMGVYKIRLRCQSSGYQRI.

Residues 1 to 27 (MPRQLSAAAVLFASLAVILHDGSQMRA) form the signal peptide. The Lumenal portion of the chain corresponds to 28 to 381 (KAFPKTRDYS…NVDECSSDYT (354 aa)). Residues 135-217 (PPTITPPAHT…ASTVPGSTLA (83 aa)) are disordered. Over residues 142–170 (AHTTGTSSSTVNHTTGNATQPSNQTTLPA) the composition is skewed to polar residues. Residues 188–208 (PTHAPGTTAAAHNTTRTAAPA) are compositionally biased toward low complexity. N-linked (GlcNAc...) asparagine glycosylation is present at Asn-200. The cysteines at positions 237 and 274 are disulfide-linked. The N-linked (GlcNAc...) asparagine glycan is linked to Asn-291. A disulfide bond links Cys-339 and Cys-376. A helical transmembrane segment spans residues 382 to 402 (IVLPVIGAIVVGLCLVGMGVY). Residues 403 to 416 (KIRLRCQSSGYQRI) are Cytoplasmic-facing.

The protein belongs to the LAMP family. In terms of assembly, monomer. Interacts with FURIN.

Its subcellular location is the cell surface. It localises to the lysosome membrane. It is found in the cytoplasmic vesicle membrane. The protein localises to the early endosome membrane. Lysosomal membrane glycoprotein which plays a role in the unfolded protein response (UPR) that contributes to protein degradation and cell survival during proteasomal dysfunction. Plays a role in the process of fusion of the lysosome with the autophagosome, thereby modulating the autophagic process. Promotes hepatocellular lipogenesis through activation of the PI3K/Akt pathway. May also play a role in dendritic cell function and in adaptive immunity. The polypeptide is Lysosome-associated membrane glycoprotein 3 (LAMP3) (Macaca mulatta (Rhesus macaque)).